A 154-amino-acid polypeptide reads, in one-letter code: UPF0178 protein SPO3827 (154 aa).

This sequence belongs to the UPF0178 family.

The polypeptide is UPF0178 protein SPO3827 (Ruegeria pomeroyi (strain ATCC 700808 / DSM 15171 / DSS-3) (Silicibacter pomeroyi)).